Consider the following 140-residue polypeptide: L-fucose mutarotase (140 aa).

H22 serves as the catalytic Proton donor. Substrate is bound by residues D30, R107, and 129-131 (YGN).

This sequence belongs to the RbsD / FucU family. FucU mutarotase subfamily. In terms of assembly, homodecamer.

Its subcellular location is the cytoplasm. It carries out the reaction alpha-L-fucose = beta-L-fucose. It functions in the pathway carbohydrate metabolism; L-fucose metabolism. In terms of biological role, involved in the anomeric conversion of L-fucose. In Salmonella typhimurium (strain LT2 / SGSC1412 / ATCC 700720), this protein is L-fucose mutarotase.